The sequence spans 298 residues: Pyridoxal 5'-phosphate synthase subunit PdxS (298 aa).

Aspartate 24 provides a ligand contact to D-ribose 5-phosphate. The active-site Schiff-base intermediate with D-ribose 5-phosphate is lysine 81. Glycine 153 contributes to the D-ribose 5-phosphate binding site. Arginine 165 contributes to the D-glyceraldehyde 3-phosphate binding site. D-ribose 5-phosphate-binding positions include glycine 214 and 235-236 (GS).

Belongs to the PdxS/SNZ family. As to quaternary structure, in the presence of PdxT, forms a dodecamer of heterodimers.

It catalyses the reaction aldehydo-D-ribose 5-phosphate + D-glyceraldehyde 3-phosphate + L-glutamine = pyridoxal 5'-phosphate + L-glutamate + phosphate + 3 H2O + H(+). It functions in the pathway cofactor biosynthesis; pyridoxal 5'-phosphate biosynthesis. Catalyzes the formation of pyridoxal 5'-phosphate from ribose 5-phosphate (RBP), glyceraldehyde 3-phosphate (G3P) and ammonia. The ammonia is provided by the PdxT subunit. Can also use ribulose 5-phosphate and dihydroxyacetone phosphate as substrates, resulting from enzyme-catalyzed isomerization of RBP and G3P, respectively. The protein is Pyridoxal 5'-phosphate synthase subunit PdxS of Halalkalibacterium halodurans (strain ATCC BAA-125 / DSM 18197 / FERM 7344 / JCM 9153 / C-125) (Bacillus halodurans).